Consider the following 233-residue polypeptide: Large ribosomal subunit protein uL1 (233 aa).

Belongs to the universal ribosomal protein uL1 family. Part of the 50S ribosomal subunit.

In terms of biological role, binds directly to 23S rRNA. The L1 stalk is quite mobile in the ribosome, and is involved in E site tRNA release. Its function is as follows. Protein L1 is also a translational repressor protein, it controls the translation of the L11 operon by binding to its mRNA. The chain is Large ribosomal subunit protein uL1 from Syntrophotalea carbinolica (strain DSM 2380 / NBRC 103641 / GraBd1) (Pelobacter carbinolicus).